The chain runs to 180 residues: Large ribosomal subunit protein uL5 (180 aa).

Belongs to the universal ribosomal protein uL5 family. In terms of assembly, part of the 50S ribosomal subunit; part of the 5S rRNA/L5/L18/L25 subcomplex. Contacts the 5S rRNA and the P site tRNA. Forms a bridge to the 30S subunit in the 70S ribosome.

This is one of the proteins that bind and probably mediate the attachment of the 5S RNA into the large ribosomal subunit, where it forms part of the central protuberance. In the 70S ribosome it contacts protein S13 of the 30S subunit (bridge B1b), connecting the 2 subunits; this bridge is implicated in subunit movement. Contacts the P site tRNA; the 5S rRNA and some of its associated proteins might help stabilize positioning of ribosome-bound tRNAs. The protein is Large ribosomal subunit protein uL5 of Streptococcus mutans serotype c (strain ATCC 700610 / UA159).